Consider the following 84-residue polypeptide: Cell division topological specificity factor (84 aa).

This sequence belongs to the MinE family.

Prevents the cell division inhibition by proteins MinC and MinD at internal division sites while permitting inhibition at polar sites. This ensures cell division at the proper site by restricting the formation of a division septum at the midpoint of the long axis of the cell. In Cupriavidus taiwanensis (strain DSM 17343 / BCRC 17206 / CCUG 44338 / CIP 107171 / LMG 19424 / R1) (Ralstonia taiwanensis (strain LMG 19424)), this protein is Cell division topological specificity factor.